The following is a 61-amino-acid chain: Metallothionein-1B (61 aa).

A beta region spans residues 1–29; the sequence is MDPNCSCTTGGSCACAGSCKCKECKCTSC. A divalent metal cation contacts are provided by cysteine 5, cysteine 7, cysteine 13, cysteine 15, cysteine 19, cysteine 21, cysteine 24, cysteine 26, cysteine 29, cysteine 33, cysteine 34, cysteine 36, cysteine 37, cysteine 41, cysteine 44, cysteine 48, cysteine 50, cysteine 57, cysteine 59, and cysteine 60. The interval 30-61 is alpha; the sequence is KKCCCSCCPVGCAKCAQGCVCKGSSEKCRCCA.

The protein belongs to the metallothionein superfamily. Type 1 family. In terms of assembly, monomer.

Functionally, metallothioneins have a high content of cysteine residues that bind various heavy metals; these proteins are transcriptionally regulated by both heavy metals and glucocorticoids. The chain is Metallothionein-1B (MT1B) from Homo sapiens (Human).